A 511-amino-acid polypeptide reads, in one-letter code: GMP synthase [glutamine-hydrolyzing] (511 aa).

In terms of domain architecture, Glutamine amidotransferase type-1 spans 5–195 (IVIVLDFGGQ…LFNICGCKGD (191 aa)). Cys-82 functions as the Nucleophile in the catalytic mechanism. Catalysis depends on residues His-169 and Glu-171. The GMPS ATP-PPase domain occupies 196 to 386 (WKTSSFIEER…LGIPEKIVKR (191 aa)). 223–229 (SGGVDSS) contacts ATP.

As to quaternary structure, homodimer.

It carries out the reaction XMP + L-glutamine + ATP + H2O = GMP + L-glutamate + AMP + diphosphate + 2 H(+). It participates in purine metabolism; GMP biosynthesis; GMP from XMP (L-Gln route): step 1/1. In terms of biological role, catalyzes the synthesis of GMP from XMP. The chain is GMP synthase [glutamine-hydrolyzing] from Caldicellulosiruptor saccharolyticus (strain ATCC 43494 / DSM 8903 / Tp8T 6331).